The chain runs to 413 residues: D-nopaline dehydrogenase (413 aa).

This sequence belongs to the lysopine/nopaline/octopine/opine/vitopine dehydrogenases family. In terms of assembly, homotetramer.

The enzyme catalyses D-nopaline + NADP(+) + H2O = L-arginine + 2-oxoglutarate + NADPH + H(+). The chain is D-nopaline dehydrogenase (nos) from Agrobacterium tumefaciens (strain T37).